The following is a 187-amino-acid chain: Guanylate kinase (187 aa).

The region spanning 5–183 (GRLTVLTGPS…ALKQLETHMQ (179 aa)) is the Guanylate kinase-like domain. 12–19 (GPSGVGKG) contacts ATP.

This sequence belongs to the guanylate kinase family.

Its subcellular location is the cytoplasm. The enzyme catalyses GMP + ATP = GDP + ADP. It catalyses the reaction dZMP + ATP = dZDP + ADP. It participates in purine metabolism. In terms of biological role, essential for recycling GMP and indirectly, cGMP. Its function is as follows. (Microbial infection) Catalyzes the phosphorylation of dZMP to dZDP, when the bacterium is infected by a phage that produces the substrate for the synthesis of dZTP (2- amino-2'-deoxyadenosine 5'-triphosphate), which is then used by the phage as a DNA polymerase substrate. The protein is Guanylate kinase of Synechococcus sp. (strain CC9902).